The sequence spans 611 residues: Nuclear cap-binding protein subunit 3 (611 aa).

The disordered stretch occupies residues 1–44; sequence MAAVRGLRVSVKAGGGAEPEPMEVEEGEVEAAADRASPREVVSG. A compositionally biased stretch (acidic residues) spans 20–31; the sequence is EPMEVEEGEVEA. Positions 108–169 are RNA recognition motif (RRM) domain; that stretch reads ETLYVYGVDD…LSSMPTNEKG (62 aa). The WLDD motif; essential for 7-methylguanosine-containing mRNA cap binding signature appears at 137–140; it reads WLDD. 5 disordered regions span residues 159–230, 338–360, 373–393, 423–568, and 583–611; these read NLSS…PDTL, EEPI…DDRV, RERE…EMDY, KTIR…DSVL, and RQKK…DTDS. Residues 168–179 show a composition bias toward basic and acidic residues; that stretch reads KGQRKKDGEHSS. Composition is skewed to acidic residues over residues 196 to 218 and 339 to 358; these read DETE…DETE and EPIE…DEDD. The span at 423-439 shows a compositional bias: polar residues; that stretch reads KTIRNSMRSDSVGNSVK. Basic and acidic residues predominate over residues 446 to 463; it reads SHAEKPADVRLILEEKRQ. A compositionally biased stretch (low complexity) spans 464–475; the sequence is STASRQQSSSGK. Composition is skewed to basic and acidic residues over residues 501-511 and 544-556; these read SRREPLSDVHS and PKDK…KSEK. Positions 602–611 are enriched in low complexity; the sequence is ESSSGSDTDS.

It belongs to the NCBP3 family. In terms of assembly, component of an alternative cap-binding complex (CBC) composed of NCBP1/CBP80 and NCBP3.

It is found in the nucleus. Its subcellular location is the cytoplasm. Associates with NCBP1/CBP80 to form an alternative cap-binding complex (CBC) which plays a key role in mRNA export. NCBP3 serves as adapter protein linking the capped RNAs (m7GpppG-capped RNA) to NCBP1/CBP80. Unlike the conventional CBC with NCBP2 which binds both small nuclear RNA (snRNA) and messenger (mRNA) and is involved in their export from the nucleus, the alternative CBC with NCBP3 does not bind snRNA and associates only with mRNA thereby playing a role in only mRNA export. The chain is Nuclear cap-binding protein subunit 3 from Xenopus tropicalis (Western clawed frog).